Reading from the N-terminus, the 513-residue chain is Serine/threonine-protein kinase PBL27 (513 aa).

Residues Met-1–Gly-61 are disordered. S-palmitoyl cysteine attachment occurs at residues Cys-4 and Cys-7. Basic and acidic residues-rich tracts occupy residues Ala-15–Ala-27 and Ile-38–Ala-57. The 278-residue stretch at Phe-83 to Leu-360 folds into the Protein kinase domain. Residues Leu-89–Val-97 and Lys-112 each bind ATP. The Proton acceptor role is filled by Asp-210. Ser-244 carries the post-translational modification Phosphoserine; by CERK1. 2 positions are modified to phosphothreonine; by CERK1: Thr-245 and Thr-250. Over residues Phe-365–Gly-378 the composition is skewed to polar residues. The tract at residues Phe-365–Asp-513 is disordered. Ser-392 and Ser-401 each carry phosphoserine. Over residues Asn-417 to Arg-428 the composition is skewed to basic and acidic residues. Gly residues predominate over residues Ser-434–Arg-446. Residues Gln-456–Thr-473 are compositionally biased toward polar residues. Residues Arg-475–Ala-486 are compositionally biased toward basic and acidic residues. The span at Gly-504 to Asp-513 shows a compositional bias: polar residues.

The protein belongs to the protein kinase superfamily. Ser/Thr protein kinase family. As to quaternary structure, interacts with CERK1 (preferentially unphosphorylated) at the plasma membrane. Binds to MAPKKK5 at the plasma membrane; disassociation is induced by chitin perception by the CERK1 complex. Also associates with MAPKKK3. Phosphorylated by CERK1 upon elicitation by chitin. In terms of processing, palmitoylation at Cys-4 and Cys-7 are required for plasma membrane location.

Its subcellular location is the cell membrane. The catalysed reaction is L-seryl-[protein] + ATP = O-phospho-L-seryl-[protein] + ADP + H(+). The enzyme catalyses L-threonyl-[protein] + ATP = O-phospho-L-threonyl-[protein] + ADP + H(+). Receptor-like cytoplasmic kinase involved in the transduction of signal between the host cell surface chitin receptor complex CERK1-LYK5 and the intracellular MAPKKK5-dependent mitogen-activated protein kinase (MAPK) cascade that leads to chitin-induced immunity. Phosphorylates and activates MAPKKK5 when phosphorylated by CERK1 after elicitation by chitin. The polypeptide is Serine/threonine-protein kinase PBL27 (Arabidopsis thaliana (Mouse-ear cress)).